Consider the following 130-residue polypeptide: Anti-adapter protein IraD (130 aa).

It belongs to the GpW/Gp25 family. IraD subfamily. In terms of assembly, interacts with RssB.

The protein resides in the cytoplasm. In terms of biological role, inhibits RpoS proteolysis by regulating RssB activity, thereby increasing the stability of the sigma stress factor RpoS during oxidative stress. Its effect on RpoS stability is due to its interaction with RssB, which probably blocks the interaction of RssB with RpoS, and the consequent delivery of the RssB-RpoS complex to the ClpXP protein degradation pathway. This chain is Anti-adapter protein IraD, found in Escherichia coli O7:K1 (strain IAI39 / ExPEC).